A 519-amino-acid polypeptide reads, in one-letter code: Carboxyl-terminal-processing peptidase 3, chloroplastic (519 aa).

A PDZ domain is found at 186-274; the sequence is YQSFRIGSDG…IKLKNVNGSG (89 aa). Active-site charge relay system residues include Ser407 and Lys432.

It belongs to the peptidase S41A family.

Its subcellular location is the plastid. It localises to the chloroplast thylakoid lumen. It carries out the reaction The enzyme shows specific recognition of a C-terminal tripeptide, Xaa-Yaa-Zaa, in which Xaa is preferably Ala or Leu, Yaa is preferably Ala or Tyr, and Zaa is preferably Ala, but then cleaves at a variable distance from the C-terminus. A typical cleavage is -Ala-Ala-|-Arg-Ala-Ala-Lys-Glu-Asn-Tyr-Ala-Leu-Ala-Ala.. Protease involved in the C-terminal processing of the chloroplastic D1 protein of photosystem II. This proteolytic processing is necessary to allow the light-driven assembly of the tetranuclear manganese cluster, which is responsible for photosynthetic water oxidation. The polypeptide is Carboxyl-terminal-processing peptidase 3, chloroplastic (CTPA3) (Arabidopsis thaliana (Mouse-ear cress)).